The primary structure comprises 628 residues: Chaperone protein HtpG (628 aa).

Residues 1 to 334 form an a; substrate-binding region; that stretch reads MTTTDTASET…SEDLPLNLSR (334 aa). Residues 335-550 are b; the sequence is EMLQNNPQLA…GFGPDRELEK (216 aa). A c region spans residues 551–628; sequence MLARANKGAA…LVLRGLVAHG (78 aa).

This sequence belongs to the heat shock protein 90 family. In terms of assembly, homodimer.

It is found in the cytoplasm. Functionally, molecular chaperone. Has ATPase activity. This Rhodopseudomonas palustris (strain BisB5) protein is Chaperone protein HtpG.